A 432-amino-acid polypeptide reads, in one-letter code: Adenylosuccinate synthetase (432 aa).

GTP is bound by residues 13–19 (GDEGKGK) and 41–43 (GHT). Residue Asp-14 is the Proton acceptor of the active site. The Mg(2+) site is built by Asp-14 and Gly-41. Residues 14–17 (DEGK), 39–42 (NAGH), Thr-130, Arg-144, Gln-225, Thr-240, and Arg-304 contribute to the IMP site. His-42 acts as the Proton donor in catalysis. Position 300–306 (300–306 (ATTGRRR)) interacts with substrate. GTP contacts are provided by residues Arg-306, 332-334 (KLD), and 415-417 (STG).

The protein belongs to the adenylosuccinate synthetase family. As to quaternary structure, homodimer. Mg(2+) serves as cofactor.

It localises to the cytoplasm. The catalysed reaction is IMP + L-aspartate + GTP = N(6)-(1,2-dicarboxyethyl)-AMP + GDP + phosphate + 2 H(+). Its pathway is purine metabolism; AMP biosynthesis via de novo pathway; AMP from IMP: step 1/2. Its function is as follows. Plays an important role in the de novo pathway of purine nucleotide biosynthesis. Catalyzes the first committed step in the biosynthesis of AMP from IMP. This chain is Adenylosuccinate synthetase, found in Citrobacter koseri (strain ATCC BAA-895 / CDC 4225-83 / SGSC4696).